The following is a 364-amino-acid chain: S-adenosylmethionine:tRNA ribosyltransferase-isomerase (364 aa).

This sequence belongs to the QueA family. In terms of assembly, monomer.

The protein localises to the cytoplasm. The catalysed reaction is 7-aminomethyl-7-carbaguanosine(34) in tRNA + S-adenosyl-L-methionine = epoxyqueuosine(34) in tRNA + adenine + L-methionine + 2 H(+). It functions in the pathway tRNA modification; tRNA-queuosine biosynthesis. In terms of biological role, transfers and isomerizes the ribose moiety from AdoMet to the 7-aminomethyl group of 7-deazaguanine (preQ1-tRNA) to give epoxyqueuosine (oQ-tRNA). This is S-adenosylmethionine:tRNA ribosyltransferase-isomerase from Lachnoclostridium phytofermentans (strain ATCC 700394 / DSM 18823 / ISDg) (Clostridium phytofermentans).